The following is a 393-amino-acid chain: MLPSLQESLDGDEKELESSEEGGSAEERRLEPPPSSHYCLYSFRGSRLTQNRGDSDDGRSGGINAETPSGDDFSLSLVDTNLPSEVEPELRSFIAKRLSKGAVFEGLGNVASVELRIPGYRVGCYYCLFQQEKLLPEIAAMESEHNPSEYVVCFLGGSEKGLELFRLELDKYIQGLKNNMNCEERSLGNDVKSYLNSWYEDVVCPIQRVVLLFQEKLTFLLHAALSYTPVEFKESDEKTKRDINRFLSVASLQGLIHEGTMTSLCMAMTEEQHKSVIIDCSGPQPQFHNAGSNRFCEDWMQAFLHGAEAGNPFLFRQVLENFKLKAIQDTNNLKRFIRQAEMNHYALFKCYMFLKNCGSGDILLKIVKVEHEEMPEAKSVVAVLEEFMREALV.

The tract at residues 1–74 (MLPSLQESLD…AETPSGDDFS (74 aa)) is disordered. Phosphoserine is present on residues Ser-8 and Ser-18. Residues 9–24 (LDGDEKELESSEEGGS) are compositionally biased toward acidic residues.

Interacts with TBC1D23; this interaction may be indirect.

Its function is as follows. May have a role in spermatogenesis. The chain is Protein Njmu-R1 from Mus musculus (Mouse).